Consider the following 250-residue polypeptide: Triosephosphate isomerase (250 aa).

Substrate is bound at residue 9-11; sequence NWK. Residue His-94 is the Electrophile of the active site. The Proton acceptor role is filled by Glu-166. Residues Gly-172, Ser-212, and 233–234 contribute to the substrate site; that span reads GG.

The protein belongs to the triosephosphate isomerase family. Homodimer.

It localises to the cytoplasm. It carries out the reaction D-glyceraldehyde 3-phosphate = dihydroxyacetone phosphate. It functions in the pathway carbohydrate biosynthesis; gluconeogenesis. Its pathway is carbohydrate degradation; glycolysis; D-glyceraldehyde 3-phosphate from glycerone phosphate: step 1/1. Involved in the gluconeogenesis. Catalyzes stereospecifically the conversion of dihydroxyacetone phosphate (DHAP) to D-glyceraldehyde-3-phosphate (G3P). This chain is Triosephosphate isomerase, found in Treponema denticola (strain ATCC 35405 / DSM 14222 / CIP 103919 / JCM 8153 / KCTC 15104).